Reading from the N-terminus, the 194-residue chain is INO80 complex subunit 4 (194 aa).

Disordered regions lie at residues 24–107 (KEKQ…NSGL) and 170–194 (STHA…ATGI). Polar residues-rich tracts occupy residues 28–38 (NFTASPSSQPK) and 82–97 (SKPS…SAPK). Residue Ser86 is modified to Phosphoserine. A Phosphothreonine modification is found at Thr90.

In terms of assembly, component of the INO80 chromatin remodeling complex.

It localises to the cytoplasm. Its subcellular location is the nucleus. In terms of biological role, component of the INO80 complex which remodels chromatin by shifting nucleosomes and is involved in DNA repair. This is INO80 complex subunit 4 (ies4) from Schizosaccharomyces pombe (strain 972 / ATCC 24843) (Fission yeast).